Here is a 143-residue protein sequence, read N- to C-terminus: Transcriptional regulator MraZ (143 aa).

SpoVT-AbrB domains lie at 5–47 (QYEH…SLEE) and 76–119 (AVEC…SKEV).

It belongs to the MraZ family. As to quaternary structure, forms oligomers.

It localises to the cytoplasm. It is found in the nucleoid. In Thermoanaerobacter sp. (strain X514), this protein is Transcriptional regulator MraZ.